Reading from the N-terminus, the 888-residue chain is Molybdenum cofactor sulfurase (888 aa).

Residue serine 34 is modified to Phosphoserine. At lysine 264 the chain carries N6-(pyridoxal phosphate)lysine. Residue cysteine 424 is part of the active site. Residues serine 528 and serine 530 each carry the phosphoserine modification. Residues 706-867 (KQSSNSQRNA…LSVGSQVLPV (162 aa)) form the MOSC domain.

Belongs to the class-V pyridoxal-phosphate-dependent aminotransferase family. MOCOS subfamily. Pyridoxal 5'-phosphate is required as a cofactor.

The catalysed reaction is Mo-molybdopterin + L-cysteine + AH2 = thio-Mo-molybdopterin + L-alanine + A + H2O. The protein operates within cofactor biosynthesis; molybdopterin biosynthesis. Its function is as follows. Sulfurates the molybdenum cofactor. Sulfation of molybdenum is essential for xanthine dehydrogenase (XDH) and aldehyde oxidase (ADO) enzymes in which molybdenum cofactor is liganded by 1 oxygen and 1 sulfur atom in active form. In vitro, the C-terminal domain is able to reduce N-hydroxylated prodrugs, such as benzamidoxime. This is Molybdenum cofactor sulfurase from Homo sapiens (Human).